Here is a 928-residue protein sequence, read N- to C-terminus: TBC1 domain family member 2A (928 aa).

Position 1 is an N-acetylmethionine (Met-1). Low complexity predominate over residues 1-19 (MEGAGENAPESSSSAPGSE). The disordered stretch occupies residues 1-39 (MEGAGENAPESSSSAPGSEESARDPQVPPPEEESGDCAR). The interaction with CADH1 stretch occupies residues 1–169 (MEGAGENAPE…AGNGPVLHLE (169 aa)). Positions 45–142 (PKKLCGYLSK…WLQQLQMKRW (98 aa)) constitute a PH domain. The interval 225–275 (NKQAQGTGHEPPGEDSPQSGEPQREEQPLASDASTPGREPEDSPKPAPKPS) is disordered. Residues 295 to 433 (SEGITRNRTA…KVTQDFTHPP (139 aa)) form an interaction with RAC1 region. The stretch at 298–416 (ITRNRTAQEK…LMDKNHAKQQ (119 aa)) forms a coiled coil. Position 436 is a phosphoserine (Ser-436). Residues 625–817 (GVPREHRPRV…RVWDAFLYEG (193 aa)) enclose the Rab-GAP TBC domain. Positions 875 to 913 (MKQLRQLRMVHRERLEAELRELEQLKAEYLERRASRRRA) form a coiled coil. 2 positions are modified to phosphoserine: Ser-915 and Ser-920.

Interacts with activated RAC1 and CDH1. As to expression, expressed in a broad range of tissues, especially in kidney, liver, lung and placenta. Also expressed in keratinocytes and epithelia-containing organs. Isoform 2 is differentially expressed in prostate normal and cancer cells (at protein level).

Its subcellular location is the cytoplasm. The protein localises to the cytoplasmic vesicle. It localises to the cell junction. Acts as a GTPase-activating protein for RAB7A. Signal effector acting as a linker between RAC1 and RAB7A, leading to RAB7A inactivation and subsequent inhibition of cadherin degradation and reduced cell-cell adhesion. The chain is TBC1 domain family member 2A (TBC1D2) from Homo sapiens (Human).